A 560-amino-acid chain; its full sequence is Nucleoprotein (560 aa).

A binding site for the cap structure m7GTP region spans residues 54–236; the sequence is LRKAKRSDAD…ITRDESAVNI (183 aa). Residues 323 to 332 show a composition bias toward polar residues; the sequence is GRSWDNTSVD. The interval 323-349 is disordered; it reads GRSWDNTSVDLNPKPDPGPRAPEKNGQ. Positions 380 and 382 each coordinate Mn(2+). Residues Glu390, Cys497, His500, and Cys521 each coordinate Zn(2+). Residue Asp525 coordinates Mn(2+).

The protein belongs to the arenaviridae nucleocapsid protein family. As to quaternary structure, homomultimerizes to form the nucleocapsid. Binds to viral genomic RNA. Interacts with glycoprotein G2. Interacts with protein Z; this interaction probably directs the encapsidated genome to budding sites. Interacts with protein L; this interaction does not interfere with Z-L interaction. Interacts with host IKBKE (via Protein kinase domain); the interaction inhibits IKBKE kinase activity.

The protein localises to the virion. It is found in the host cytoplasm. Encapsidates the genome, protecting it from nucleases. The encapsidated genomic RNA is termed the nucleocapsid (NC). Serves as template for viral transcription and replication. The increased presence of protein N in host cell does not seem to trigger the switch from transcription to replication as observed in other negative strain RNA viruses. Through the interaction with host IKBKE, strongly inhibits the phosphorylation and nuclear translocation of host IRF3, a protein involved in interferon activation pathway, leading to the inhibition of interferon-beta and IRF3-dependent promoters activation. Also encodes a functional 3'-5' exoribonuclease that degrades preferentially dsRNA substrates and thereby participates in the suppression of interferon induction. The protein is Nucleoprotein of Cupixi mammarenavirus (isolate Rat/Brasil/BeAn 119303/1970) (CPXV).